The primary structure comprises 306 residues: Porphobilinogen deaminase (306 aa).

Cys-239 is subject to S-(dipyrrolylmethanemethyl)cysteine.

The protein belongs to the HMBS family. Monomer. Requires dipyrromethane as cofactor.

The enzyme catalyses 4 porphobilinogen + H2O = hydroxymethylbilane + 4 NH4(+). The protein operates within porphyrin-containing compound metabolism; protoporphyrin-IX biosynthesis; coproporphyrinogen-III from 5-aminolevulinate: step 2/4. Its function is as follows. Tetrapolymerization of the monopyrrole PBG into the hydroxymethylbilane pre-uroporphyrinogen in several discrete steps. This is Porphobilinogen deaminase from Helicobacter pylori (strain G27).